The following is an 831-amino-acid chain: Histone acetyltransferase SAS3 (831 aa).

In terms of domain architecture, MYST-type HAT spans 267 to 573; it reads VWFSQIEYIV…VKYDKLLWEP (307 aa). The C2HC MYST-type zinc-finger motif lies at 300 to 325; sequence VFICEFCLKYMTSRYTFYRHQLKCLT. Position 367 is an N6-acetyllysine; by autocatalysis (Lys367). Residues 419-421 and 426-432 contribute to the acetyl-CoA site; these read ILT and QRKGYGQ. The Proton donor/acceptor role is filled by Glu452. Ser456 contributes to the acetyl-CoA binding site. 2 disordered regions span residues 614 to 639 and 719 to 813; these read ENYNNSRAHNKRRRRRRRSSEHKTSK and PLGN…SHIR. Positions 621-633 are enriched in basic residues; the sequence is AHNKRRRRRRRSS. Composition is skewed to acidic residues over residues 736–746 and 755–794; these read EQDEVENDVDT and KEDEDEDEDFTLDDDIEDEQISEENDEEEDTYEEDSDDDE. Residues 795–812 show a composition bias toward basic and acidic residues; it reads DGKRKGQEQDENDIESHI.

It belongs to the MYST (SAS/MOZ) family. In terms of assembly, component of the NuA3 histone acetyltransferase (HAT) complex. The NuA3 HAT complex has 2 functionally distinct forms that participate in transcription. The NuA3a HAT complex is composed of at least NTO1, SAS3, TAF14, YNG1 and EAF6. The NuA3b HAT complex contains an additional subunit, PDP3. SAS3 interacts with CDC68/SPT16. In terms of processing, autoacetylation at Lys-367 is required for proper function.

The protein localises to the nucleus. It catalyses the reaction L-lysyl-[protein] + acetyl-CoA = N(6)-acetyl-L-lysyl-[protein] + CoA + H(+). Catalytic component of the NuA3 histone acetyltransferase complex, that acetylates H3K14. The NuA3 HAT complex has 2 functionally distinct forms. NuA3a binds H3K4me3, through the PHD finger of YNG1, and acetylates H3K14 at the promoter region of actively transcribed genes to promote transcription initiation. NuA3b binds H3K36me3 at the coding regions of actively transcribed genes, through the PWWP domain of PDP3, and coordinates transcription elongation. In vitro, SAS3 acetylates free histones H3 and H4. It is involved in silencing the HMR locus. The sequence is that of Histone acetyltransferase SAS3 from Saccharomyces cerevisiae (strain ATCC 204508 / S288c) (Baker's yeast).